We begin with the raw amino-acid sequence, 355 residues long: Ferrochelatase (355 aa).

Fe cation-binding residues include His214 and Glu295.

This sequence belongs to the ferrochelatase family.

It is found in the cytoplasm. The enzyme catalyses heme b + 2 H(+) = protoporphyrin IX + Fe(2+). The protein operates within porphyrin-containing compound metabolism; protoheme biosynthesis; protoheme from protoporphyrin-IX: step 1/1. Its function is as follows. Catalyzes the ferrous insertion into protoporphyrin IX. The sequence is that of Ferrochelatase from Burkholderia thailandensis (strain ATCC 700388 / DSM 13276 / CCUG 48851 / CIP 106301 / E264).